Consider the following 380-residue polypeptide: Protein RecA (380 aa).

65-72 (GPESSGKT) is a binding site for ATP. Residues 329–380 (DATGEETSETDDQAKEAKDKGTAKNGSKGQSKSTKATPAETALDLGDQPTEK) form a disordered region. Over residues 340–350 (DQAKEAKDKGT) the composition is skewed to basic and acidic residues. Positions 352 to 364 (KNGSKGQSKSTKA) are enriched in polar residues.

Belongs to the RecA family.

The protein localises to the cytoplasm. Its function is as follows. Can catalyze the hydrolysis of ATP in the presence of single-stranded DNA, the ATP-dependent uptake of single-stranded DNA by duplex DNA, and the ATP-dependent hybridization of homologous single-stranded DNAs. It interacts with LexA causing its activation and leading to its autocatalytic cleavage. The polypeptide is Protein RecA (Lactiplantibacillus plantarum (strain ATCC BAA-793 / NCIMB 8826 / WCFS1) (Lactobacillus plantarum)).